Here is a 186-residue protein sequence, read N- to C-terminus: Histone deacetylase complex subunit SAP25 (186 aa).

Disordered regions lie at residues Met1–Gly25 and Glu148–Thr186. Composition is skewed to polar residues over residues Glu148–Cys163 and Gly177–Thr186.

May be a component of the mSIN3A corepressor complex. Interacts with SIN3A and HDAC2. Widely expressed.

It localises to the nucleus. Its subcellular location is the cytoplasm. Functionally, involved in the transcriptional repression mediated by the mSIN3A but not the N-CoR corepressor complex. The polypeptide is Histone deacetylase complex subunit SAP25 (Sap25) (Mus musculus (Mouse)).